The sequence spans 705 residues: UvrABC system protein C (705 aa).

Residues 16-95 (ETPGVYRFRD…IKQFDPRFNV (80 aa)) form the GIY-YIG domain. Residues 208–243 (GRYLRRLEREMQQAAQAQEYERAARLRDDIGALRRA) form the UVR domain. Residues 315–332 (AASTGTAGSTVPTTTAGS) show a composition bias toward low complexity. 2 disordered regions span residues 315-335 (AAST…SQGE) and 683-705 (RADA…ETVS).

Belongs to the UvrC family. As to quaternary structure, interacts with UvrB in an incision complex.

It is found in the cytoplasm. Functionally, the UvrABC repair system catalyzes the recognition and processing of DNA lesions. UvrC both incises the 5' and 3' sides of the lesion. The N-terminal half is responsible for the 3' incision and the C-terminal half is responsible for the 5' incision. The sequence is that of UvrABC system protein C from Frankia casuarinae (strain DSM 45818 / CECT 9043 / HFP020203 / CcI3).